A 98-amino-acid chain; its full sequence is NADH-ubiquinone oxidoreductase chain 4L (98 aa).

3 helical membrane passes run 1–21 (MPFI…GLLI), 29–49 (SLLC…LMTL), and 61–81 (IVLL…LVLI).

Belongs to the complex I subunit 4L family. In terms of assembly, core subunit of respiratory chain NADH dehydrogenase (Complex I) which is composed of 45 different subunits.

The protein resides in the mitochondrion inner membrane. It carries out the reaction a ubiquinone + NADH + 5 H(+)(in) = a ubiquinol + NAD(+) + 4 H(+)(out). In terms of biological role, core subunit of the mitochondrial membrane respiratory chain NADH dehydrogenase (Complex I) which catalyzes electron transfer from NADH through the respiratory chain, using ubiquinone as an electron acceptor. Part of the enzyme membrane arm which is embedded in the lipid bilayer and involved in proton translocation. The sequence is that of NADH-ubiquinone oxidoreductase chain 4L (MT-ND4L) from Aotus trivirgatus (Three-striped night monkey).